The primary structure comprises 218 residues: Probable 3-keto-L-gulonate-6-phosphate decarboxylase (218 aa).

Asp11 contributes to the substrate binding site. Mg(2+)-binding residues include Glu33 and Asp62. Arg194 lines the substrate pocket.

The protein belongs to the HPS/KGPDC family. KGPDC subfamily. Mg(2+) serves as cofactor.

The catalysed reaction is 3-dehydro-L-gulonate 6-phosphate + H(+) = L-xylulose 5-phosphate + CO2. It functions in the pathway cofactor degradation; L-ascorbate degradation; D-xylulose 5-phosphate from L-ascorbate: step 2/4. Functionally, catalyzes the decarboxylation of 3-keto-L-gulonate-6-P into L-xylulose-5-P. Is involved in the anaerobic L-ascorbate utilization. The sequence is that of Probable 3-keto-L-gulonate-6-phosphate decarboxylase (ulaD) from Mycoplasma pneumoniae (strain ATCC 29342 / M129 / Subtype 1) (Mycoplasmoides pneumoniae).